The chain runs to 493 residues: Cytochrome P450 710A3 (493 aa).

Residues 5 to 25 form a helical membrane-spanning segment; the sequence is VSLFASLTPYLVSALLLFLLL. Cys-435 is a heme binding site.

It belongs to the cytochrome P450 family. Heme serves as cofactor. Expressed in stems. Detected in primary root caps and immature petals.

It localises to the membrane. It catalyses the reaction 5-dehydroepisterol + NADPH + O2 + H(+) = ergosta-5,7,22,24(28)-tetraen-3beta-ol + NADP(+) + 2 H2O. In terms of biological role, required to form the C-22 double bond in the sterol side chain. Possesses in vitro C-22 desaturase activity toward beta-sitosterol and produces stigmasterol. The sequence is that of Cytochrome P450 710A3 from Arabidopsis thaliana (Mouse-ear cress).